Consider the following 68-residue polypeptide: Sec-independent protein translocase protein TatA (68 aa).

The helical transmembrane segment at 1-21 (MGSFSIWHWLIVLVVVLLLFG) threads the bilayer. The tract at residues 46–68 (EEAASADKTIDGKTVEHKSDEVR) is disordered. A compositionally biased stretch (basic and acidic residues) spans 53-68 (KTIDGKTVEHKSDEVR).

This sequence belongs to the TatA/E family. As to quaternary structure, the Tat system comprises two distinct complexes: a TatABC complex, containing multiple copies of TatA, TatB and TatC subunits, and a separate TatA complex, containing only TatA subunits. Substrates initially bind to the TatABC complex, which probably triggers association of the separate TatA complex to form the active translocon.

Its subcellular location is the cell inner membrane. Its function is as follows. Part of the twin-arginine translocation (Tat) system that transports large folded proteins containing a characteristic twin-arginine motif in their signal peptide across membranes. TatA could form the protein-conducting channel of the Tat system. This chain is Sec-independent protein translocase protein TatA, found in Sinorhizobium fredii (strain NBRC 101917 / NGR234).